The chain runs to 634 residues: Ankyrin repeat protein OPG025 (634 aa).

6 ANK repeats span residues 36–69 (DGET…YKNI), 70–100 (NDFD…EINS), 103–134 (NGIN…PTCS), 175–211 (MGKT…EMRY), 307–337 (IQDL…TLYR), and 412–441 (HGCS…DINI).

The protein belongs to the orthopoxvirus OPG025 family. As to quaternary structure, interacts with components of host SCF complex CUL1 and SKP1 and components of the cullin deneddylation/COP9 signalosome complex subunits COPS7A and COPS7B.

Its function is as follows. Plays a role in the inhibition of host immune repsonse by counteracting the action of interferons on early events in the viral replication cycle. In Vaccinia virus (strain Copenhagen) (VACV), this protein is Ankyrin repeat protein OPG025 (OPG025).